The following is a 90-amino-acid chain: Probable Fe(2+)-trafficking protein (90 aa).

This sequence belongs to the Fe(2+)-trafficking protein family.

Could be a mediator in iron transactions between iron acquisition and iron-requiring processes, such as synthesis and/or repair of Fe-S clusters in biosynthetic enzymes. This chain is Probable Fe(2+)-trafficking protein, found in Acidovorax ebreus (strain TPSY) (Diaphorobacter sp. (strain TPSY)).